A 967-amino-acid chain; its full sequence is Transmembrane channel-like protein 5 (967 aa).

4 stretches are compositionally biased toward polar residues: residues 1–10 (MSSFHQNSSY), 21–31 (GSRNHTHNYLE), 53–62 (NPHSSGSRTN), and 168–184 (QDNSYYHSGSRPHSNLP). The segment at 1–240 (MSSFHQNSSY…EEGDGYSSSK (240 aa)) is disordered. Residues 1-420 (MSSFHQNSSY…YFSFLRWLLK (420 aa)) are Extracellular-facing. The helical transmembrane segment at 421-441 (FNIFSFVMNFSFIIIPQFTVG) threads the bilayer. The Cytoplasmic segment spans residues 442-449 (AKNTLQFT). A helical membrane pass occupies residues 450 to 470 (GLEFFTGAGYFGDTVMYYGFY). The Extracellular segment spans residues 471-487 (TNSTIRHRMGGASYNMQ). The helical transmembrane segment at 488–508 (LAYIFTIGACLVVCFFSLLFS) threads the bilayer. Topologically, residues 509-581 (MAKYFRNNFI…NQQLTRFSAH (73 aa)) are cytoplasmic. The helical transmembrane segment at 582-602 (VAAWLVSTGVTAACCVAVYYL) threads the bilayer. The Extracellular portion of the chain corresponds to 603 to 616 (AEYNSEFLKTHRNP). Residues 617 to 637 (GAVLLLPFVVSCINLAVPRFY) form a helical membrane-spanning segment. The Cytoplasmic segment spans residues 638–660 (SMFRLVERYEIPRQEVYVLLVRN). Residues 661 to 681 (IFLKISIVGILCYYWLNIVAL) traverse the membrane as a helical segment. Residues 682 to 694 (SGEECWETLIGQD) are Extracellular-facing. The chain crosses the membrane as a helical span at residues 695–715 (IYRLLLMDFVFSLADSLLGEF). Residues 716-749 (LRRLIGMKFTSLSLQEFDIARNVLELIYAQTLTW) lie on the Cytoplasmic side of the membrane. A helical membrane pass occupies residues 750 to 770 (LGIFFCPLLPFIQMITLFIMF). The Extracellular segment spans residues 771–796 (YVKNVSLMMNFQPPSKAWRASQMITF). Residues 797-817 (FIFLLFFPSFTGVLCTLAITI) form a helical membrane-spanning segment. At 818 to 861 (WRLKPSADCGPFRGLPSFIQSIYSWIDTLSRRPGYLWVVWIYQN) the chain is on the cytoplasmic side. A helical transmembrane segment spans residues 862-882 (LIGSVHFFFILTLIVLIITYL). Over 883–967 (YWQITEGRKV…RSAQEENPIA (85 aa)) the chain is Extracellular.

Belongs to the TMC family. Ubiquitously expressed.

It localises to the membrane. Its function is as follows. Probable component of an ion channel. Molecular function hasn't been characterized yet. The polypeptide is Transmembrane channel-like protein 5 (Mus musculus (Mouse)).